Consider the following 704-residue polypeptide: Ion-translocating oxidoreductase complex subunit C (704 aa).

2 consecutive 4Fe-4S ferredoxin-type domains span residues 368–397 (MGAPQEEKSCIRCSACADACPADLLPQQLY) and 407–436 (KATAHHIADCIECGACAWVCPSNIPLVQYF). Residues cysteine 377, cysteine 380, cysteine 383, cysteine 387, cysteine 416, cysteine 419, cysteine 422, and cysteine 426 each coordinate [4Fe-4S] cluster. The segment at 534 to 682 (QARAKQAAHP…AEPADPRKAA (149 aa)) is disordered.

Belongs to the 4Fe4S bacterial-type ferredoxin family. RnfC subfamily. As to quaternary structure, the complex is composed of six subunits: RsxA, RsxB, RsxC, RsxD, RsxE and RsxG. It depends on [4Fe-4S] cluster as a cofactor.

The protein localises to the cell inner membrane. Its function is as follows. Part of a membrane-bound complex that couples electron transfer with translocation of ions across the membrane. Required to maintain the reduced state of SoxR. The polypeptide is Ion-translocating oxidoreductase complex subunit C (Salmonella enteritidis PT4 (strain P125109)).